The following is a 214-amino-acid chain: Type IV major pilin protein PilE1 (214 aa).

Residues 1–7 (MNTLQKG) constitute a propeptide, leader sequence. Position 8 is an N-methylphenylalanine (F8). A helical membrane pass occupies residues 8–28 (FTLIELMIVIAIVGILAAVAL). C127 and C161 are disulfide-bonded. Residues 182 to 214 (AGTDAVTADTTGKDKEIDTKHLPSTCRDKSSAE) form a disordered region. Positions 192 to 214 (TGKDKEIDTKHLPSTCRDKSSAE) are enriched in basic and acidic residues.

It belongs to the N-Me-Phe pilin family. The pili are polar flexible filaments of about 5.4 nanometers diameter and 2.5 micrometers average length; they consist of only a single polypeptide chain arranged in a helical configuration of five subunits per turn in the assembled pilus.

The protein resides in the fimbrium. Its subcellular location is the membrane. Functionally, major component of the type IV pilus (T4P) that plays a role in cellular adherence, microcolony formation, resistance to neutrophil mediated killing, twitching motility as well as transformation. Mediates the attachment and the formation of bacterial microcolonies on host epithelial cells. Mechanistically, pili retractation induces host NF-kappa-B activation in infected cells, which is temporally associated with the formation of gonococcal microcolonies. In Neisseria gonorrhoeae, this protein is Type IV major pilin protein PilE1 (pilE1).